Here is a 284-residue protein sequence, read N- to C-terminus: MKRIRQTMRAVVHGSGLRRLTPPQRVTSGTVVLGARHLSKSYGARTVLDDVSLDVRTGEVLALVGPNGAGKSTLLSILTGDTPPDRGEVTVLDRPLAAWSPAELALRRAVLPQSFTVSFPFDVVDVVHMGRAPWAAVDVDVDDDRVVADAMAATEVTALAARKFPSLSGGEKARVMLARVLAQQTQIMLWDEPTAALDIRHQESVLRIARQRAAQGDAIVVVLHDLALAAAYADQVAILSQGQIAAYGPPAEVFTAKLLSDVYSYEVEIVSHPRTGVPLVLPVR.

The ABC transporter domain maps to 33–266; it reads LGARHLSKSY…KLLSDVYSYE (234 aa). 65-72 contacts ATP; sequence GPNGAGKS.

This sequence belongs to the ABC transporter superfamily. Heme (hemin) importer (TC 3.A.1.14.5) family. The complex is composed of two ATP-binding proteins (HmuV), two transmembrane proteins (HmuU) and a solute-binding protein (HmuT).

Its subcellular location is the cell membrane. Its function is as follows. Part of the ABC transporter complex HmuTUV involved in hemin import. Responsible for energy coupling to the transport system. The chain is Hemin import ATP-binding protein HmuV from Thermobifida fusca (strain YX).